The primary structure comprises 713 residues: Forkhead box protein P2 (713 aa).

Residues M1–D28 show a composition bias toward polar residues. 2 disordered regions span residues M1–V44 and D279–S337. Over residues T290 to S303 the composition is skewed to low complexity. Residues S313 to L322 are compositionally biased toward polar residues. Basic and acidic residues predominate over residues A324 to G335. The segment at G344–H369 adopts a C2H2-type zinc-finger fold. The segment at V386–L407 is leucine-zipper. The segment at P420–V424 is CTBP1-binding. The segment covering T436–Q457 has biased composition (low complexity). Positions T436–T463 are disordered. The fork-head DNA-binding region spans R502 to L592. Disordered regions lie at residues L647–I666 and V676–E713. The segment covering L697 to E713 has biased composition (acidic residues).

Forms homodimers and heterodimers with FOXP1 and FOXP4. Dimerization is required for DNA-binding. Interacts with CTBP1. Interacts with FOXP1. Interacts with TBR1. Interacts with ZMYM2.

Its subcellular location is the nucleus. In terms of biological role, transcriptional repressor that may play a role in the specification and differentiation of lung epithelium. May also play a role in developing neural, gastrointestinal and cardiovascular tissues. Can act with CTBP1 to synergistically repress transcription but CTPBP1 is not essential. Plays a role in synapse formation by regulating SRPX2 levels. The protein is Forkhead box protein P2 (FOXP2) of Pongo pygmaeus (Bornean orangutan).